The primary structure comprises 819 residues: DNA topoisomerase 4 subunit A (819 aa).

Positions Leu-30–Leu-496 constitute a Topo IIA-type catalytic domain. Tyr-118 (O-(5'-phospho-DNA)-tyrosine intermediate) is an active-site residue.

It belongs to the type II topoisomerase GyrA/ParC subunit family. ParC type 2 subfamily. As to quaternary structure, heterotetramer composed of ParC and ParE.

The protein localises to the cell membrane. The catalysed reaction is ATP-dependent breakage, passage and rejoining of double-stranded DNA.. Functionally, topoisomerase IV is essential for chromosome segregation. It relaxes supercoiled DNA. Performs the decatenation events required during the replication of a circular DNA molecule. The chain is DNA topoisomerase 4 subunit A from Streptococcus pyogenes serotype M1.